Here is a 127-residue protein sequence, read N- to C-terminus: Anti-adapter protein IraD (127 aa).

This sequence belongs to the GpW/Gp25 family. IraD subfamily. In terms of assembly, interacts with RssB.

It localises to the cytoplasm. Its function is as follows. Inhibits RpoS proteolysis by regulating RssB activity, thereby increasing the stability of the sigma stress factor RpoS during oxidative stress. Its effect on RpoS stability is due to its interaction with RssB, which probably blocks the interaction of RssB with RpoS, and the consequent delivery of the RssB-RpoS complex to the ClpXP protein degradation pathway. The protein is Anti-adapter protein IraD of Escherichia coli O6:K15:H31 (strain 536 / UPEC).